The sequence spans 824 residues: Intraflagellar transport protein 88 homolog (824 aa).

Disordered stretches follow at residues 1-27 and 111-134; these read MENVHLAPETDEDDLYSGFNDYNPAYD and AFDPLGQSRGPAPPLEAKNEDSPE. TPR repeat units follow at residues 196 to 229, 232 to 265, 271 to 304, 415 to 448, 450 to 483, 484 to 517, 518 to 551, 552 to 585, 586 to 619, 620 to 653, and 654 to 687; these read YSVLFNLASQYSANEMYAEALNTYQVIVKNKMFS, GRLKVNMGNIYLKQRNYSKAIKFYRMALDQIPSV, IKIMQNIGITFIKTGQYSDAINSFEHIMSMAPSL, NDLEINKAITYLRQKDFNQAVDTLKMFEKKDSRV, SAAATNLSFLYYLENEFAQASSYADLAVNSDRYN, PSALTNKGNTVFANGDYEKAAEFYKEALRNDSSC, TEALYNIGLTYKKLNRLDEALDSFLKLHAILRNS, AQVLCQIANIYELMEDPNQAIEWLMQLISVVPTD, SQALSKLGELYDSEGDKSQAFQYYYESYRYFPSN, IEVIEWLGAYYIDTQFCEKAIQYFERASLIQPTQ, and VKWQLMVASCFRRSGNYQKALDTYKEIHRKFPEN. Over residues 721-731 the composition is skewed to basic and acidic residues; the sequence is EMREQRIKSGR. Residues 721-824 are disordered; it reads EMREQRIKSG…EELGDDLLPE (104 aa). Residues 748–757 show a composition bias toward polar residues; sequence DSGQNNSASS. The segment covering 797–808 has biased composition (basic and acidic residues); sequence ERPKTAAKKRID. The segment covering 809–824 has biased composition (acidic residues); sequence EDDFADEELGDDLLPE.

In terms of assembly, component of the IFT complex B, at least composed of IFT20, IFT22, IFT25, IFT27, IFT46, IFT52, TRAF3IP1/IFT54, IFT57, IFT74, IFT80, IFT81, and IFT88. Interacts with IFT20, IFT22, IFT25, IFT27, IFT52, TRAF3IP1, IFT74, IFT80 and IFT81. Interacts with IFT172. Interacts with IFT57. Interacts with IFT46. Interacts with IFT70B. Interacts with C2CD3. Interacts with ENTR1 (via N-terminus). Interacts with LRRC56. Interacts with DZIP1. Interacts with CCDC38. Interacts with CCDC146. Interacts with CFAP53. As to expression, testis.

It is found in the cytoplasm. The protein resides in the cytoskeleton. Its subcellular location is the microtubule organizing center. It localises to the centrosome. The protein localises to the centriole. It is found in the cilium basal body. The protein resides in the cell projection. Its subcellular location is the cilium. It localises to the flagellum. Its function is as follows. Positively regulates primary cilium biogenesis. Also involved in autophagy since it is required for trafficking of ATG16L and the expansion of the autophagic compartment. The sequence is that of Intraflagellar transport protein 88 homolog (Ift88) from Mus musculus (Mouse).